The sequence spans 61 residues: Large ribosomal subunit protein uL30 (61 aa).

Belongs to the universal ribosomal protein uL30 family. In terms of assembly, part of the 50S ribosomal subunit.

This is Large ribosomal subunit protein uL30 from Treponema denticola (strain ATCC 35405 / DSM 14222 / CIP 103919 / JCM 8153 / KCTC 15104).